A 427-amino-acid polypeptide reads, in one-letter code: Trigger factor (427 aa).

The region spanning 163-248 (GDTVVIDFVG…VHEVKAKEVP (86 aa)) is the PPIase FKBP-type domain.

It belongs to the FKBP-type PPIase family. Tig subfamily.

The protein localises to the cytoplasm. It catalyses the reaction [protein]-peptidylproline (omega=180) = [protein]-peptidylproline (omega=0). Functionally, involved in protein export. Acts as a chaperone by maintaining the newly synthesized protein in an open conformation. Functions as a peptidyl-prolyl cis-trans isomerase. In Streptococcus equi subsp. equi (strain 4047), this protein is Trigger factor.